Here is a 130-residue protein sequence, read N- to C-terminus: Small ribosomal subunit protein uS11 (130 aa).

It belongs to the universal ribosomal protein uS11 family. Part of the 30S ribosomal subunit. Interacts with proteins S7 and S18. Binds to IF-3.

Functionally, located on the platform of the 30S subunit, it bridges several disparate RNA helices of the 16S rRNA. Forms part of the Shine-Dalgarno cleft in the 70S ribosome. In Prochlorococcus marinus (strain AS9601), this protein is Small ribosomal subunit protein uS11.